Here is a 331-residue protein sequence, read N- to C-terminus: UPF0194 membrane protein YbhG (331 aa).

The N-terminal stretch at 1-19 (MKKPVVIGLAIAAIVTVIA) is a signal peptide. Residues 107–208 (EEIAQAAAAV…LDLQDTTLIA (102 aa)) adopt a coiled-coil conformation.

This sequence belongs to the UPF0194 family.

It localises to the periplasm. This Salmonella arizonae (strain ATCC BAA-731 / CDC346-86 / RSK2980) protein is UPF0194 membrane protein YbhG.